A 338-amino-acid polypeptide reads, in one-letter code: Ferrochelatase (338 aa).

Fe cation-binding residues include His189 and Glu294.

The protein belongs to the ferrochelatase family.

It localises to the cytoplasm. It catalyses the reaction heme b + 2 H(+) = protoporphyrin IX + Fe(2+). It participates in porphyrin-containing compound metabolism; protoheme biosynthesis; protoheme from protoporphyrin-IX: step 1/1. In terms of biological role, catalyzes the ferrous insertion into protoporphyrin IX. The polypeptide is Ferrochelatase (Pseudomonas putida (strain ATCC 47054 / DSM 6125 / CFBP 8728 / NCIMB 11950 / KT2440)).